The chain runs to 642 residues: Threonine--tRNA ligase (642 aa).

The TGS domain occupies 1-61; that stretch reads MPVITLPDGS…ETDAELSIIT (61 aa). Positions 243–534 are catalytic; sequence DHRKIGKQLD…LIEEYAGRFP (292 aa). Residues cysteine 334, histidine 385, and histidine 511 each contribute to the Zn(2+) site.

Belongs to the class-II aminoacyl-tRNA synthetase family. Homodimer. It depends on Zn(2+) as a cofactor.

The protein resides in the cytoplasm. The catalysed reaction is tRNA(Thr) + L-threonine + ATP = L-threonyl-tRNA(Thr) + AMP + diphosphate + H(+). Catalyzes the attachment of threonine to tRNA(Thr) in a two-step reaction: L-threonine is first activated by ATP to form Thr-AMP and then transferred to the acceptor end of tRNA(Thr). Also edits incorrectly charged L-seryl-tRNA(Thr). The protein is Threonine--tRNA ligase of Shewanella sp. (strain MR-7).